A 90-amino-acid polypeptide reads, in one-letter code: NELL2-interacting cell ontogeny regulator 1 (90 aa).

A signal peptide spans 1 to 28 (MAPALRSLLSPRTLLLLLLSLALLGARA).

Belongs to the NICOL family. Interacts with NELL2; triggers epididymal differentiation. Interacts with cell surface receptor TFRC; the interaction mediates uptake of NICOL1 into fibroblasts. As to expression, expression is enriched in both male and female reproductive organs, including the testis, epididymis, seminal vesicles, coagulating glands, ovary and uterus, and in various non-reproductive organs such as brain, thymus and liver. In testis, expressed in both germ cells and Sertoli cells. Also expressed at low levels in the kidney. Expressed during neocortex and cerebellum development.

It is found in the secreted. Its subcellular location is the cytoplasm. It localises to the perinuclear region. Its function is as follows. mRNA-binding protein which interacts with a range of target mRNAs including SERPINE1, ACTA2, CCN2 and COL4A1 and may promote extracellular matrix production. Binds to the 3'-UTR of SERPINE1 mRNA and stabilizes the mRNA, possibly by competing for binding with SERBP1 and preventing SERBP1-mediated mRNA degradation. Also binds to the 3'-UTR of ACTA2. Testis-derived lumicrine factor that triggers epididymal differentiation and sperm maturation. This is NELL2-interacting cell ontogeny regulator 1 from Mus musculus (Mouse).